We begin with the raw amino-acid sequence, 236 residues long: MKLNIAYPVNGSQKKINIEDKNKVRCFMEKRIGQEVEATTLGDEFKGYVFKITGGNDTEGFPMMQGVGAPTRVRLLLDGRSGCFKPSRDGERKRKSVRGCIVAEDIASLQLIIVKKGDAEIPGLTDVSFPASKGPKRASNIRKLFKLSKDEDVRSFVIRRELPATDKRKAKSKAPKIQRLVTPTTVARRKALRAKKAARHTKASNEAAEYAKLVAQRQQAKAKRSVKVSSKKVVAK.

It belongs to the eukaryotic ribosomal protein eS6 family. As to quaternary structure, component of the small ribosomal subunit. Part of the small subunit (SSU) processome, composed of more than 70 proteins and the RNA chaperone small nucleolar RNA (snoRNA) U3. In terms of processing, ribosomal protein S6 is the major substrate of protein kinases in eukaryote ribosomes.

The protein localises to the cytoplasm. The protein resides in the nucleus. It localises to the nucleolus. In terms of biological role, component of the 40S small ribosomal subunit. Plays an important role in controlling cell growth and proliferation through the selective translation of particular classes of mRNA. Part of the small subunit (SSU) processome, first precursor of the small eukaryotic ribosomal subunit. During the assembly of the SSU processome in the nucleolus, many ribosome biogenesis factors, an RNA chaperone and ribosomal proteins associate with the nascent pre-rRNA and work in concert to generate RNA folding, modifications, rearrangements and cleavage as well as targeted degradation of pre-ribosomal RNA by the RNA exosome. In Dictyostelium discoideum (Social amoeba), this protein is Small ribosomal subunit protein eS6 (rps6).